Here is a 252-residue protein sequence, read N- to C-terminus: Triosephosphate isomerase (252 aa).

Asn9–Lys11 serves as a coordination point for substrate. His96 functions as the Electrophile in the catalytic mechanism. Glu168 functions as the Proton acceptor in the catalytic mechanism. Substrate is bound by residues Gly174, Ser214, and Gly235–Gly236.

Belongs to the triosephosphate isomerase family. As to quaternary structure, homodimer.

It localises to the cytoplasm. It carries out the reaction D-glyceraldehyde 3-phosphate = dihydroxyacetone phosphate. The protein operates within carbohydrate biosynthesis; gluconeogenesis. It functions in the pathway carbohydrate degradation; glycolysis; D-glyceraldehyde 3-phosphate from glycerone phosphate: step 1/1. Its function is as follows. Involved in the gluconeogenesis. Catalyzes stereospecifically the conversion of dihydroxyacetone phosphate (DHAP) to D-glyceraldehyde-3-phosphate (G3P). This is Triosephosphate isomerase from Chloroherpeton thalassium (strain ATCC 35110 / GB-78).